The primary structure comprises 787 residues: MQFSYSWLKTQADTELSSDKLEHLLTMSGLEVEEAETAAPAFAGVVIAEVKSVEKHPDADRLNVTRVDVGTGELVQIVCGAPNVKAGIKVPCSLPGAVLPGNFKIKPTKMRGVVSNGMLCSTDELGLPDDGVNGLHILPEDAPVGTNIREYLDLDDTLFTLKITPNRADCLSVKGIAREVSALTGCAFRQPEIRKMPSEGGKTRAVKIDAPADCGRFISRVIENVNAKAATPDWMKQRLERSGIRSISVLVDIGNYVMLEIGQPMHVFDADKLSGSLHIRRAREGETLECLNEKTVSLSENTLVVADEKGALSLAGLMGGAASAVSDGTQNIVLEAAWFAPEIIAGKSRQYGFGSDSSFRFERGVDYRLQADAIERATELVLQICGGAAGEMVEAQGELPEVKQVGLRLGRLKTVLGVDIPSEQVETILQHLGLQPEKTAEGFRVTAPSFRFDIEIEADLIEEIGRVYGYENIPDDYTSGRLKMLELPETRRPRFAVYNEMAARGYREVVSYAFVNEQWEQDFAANADPIRLQNPLAAQYAVMRSTLIGGLVEILQNNLNRKQNRVRVFEIARVFGKGSDGRFVQNERIGGLWYGAAMPEQWGGKTRNADFYDIKADVENLLKNKAVEFVKTGYPALHPGRAANIVSDGKVIGFVGELHPKWLQKYDLPQAPLVFEIDMAAVLECGKTRYRAVSKFQPVRRDLAFVMPEAMSHDDLLLVLKGAANKLVQEISVFDVYRGMGLPEGMKSVAVKVILQDMENTLTDEAVEPLIGKLIGAATAAGARLRS.

Residues 39-149 (APAFAGVVIA…EDAPVGTNIR (111 aa)) form the tRNA-binding domain. The 76-residue stretch at 400-475 (PEVKQVGLRL…RVYGYENIPD (76 aa)) folds into the B5 domain. Residues Asp-453, Asp-459, Glu-462, and Glu-463 each contribute to the Mg(2+) site. The FDX-ACB domain maps to 694 to 786 (SKFQPVRRDL…AATAAGARLR (93 aa)).

It belongs to the phenylalanyl-tRNA synthetase beta subunit family. Type 1 subfamily. Tetramer of two alpha and two beta subunits. Requires Mg(2+) as cofactor.

Its subcellular location is the cytoplasm. The catalysed reaction is tRNA(Phe) + L-phenylalanine + ATP = L-phenylalanyl-tRNA(Phe) + AMP + diphosphate + H(+). The sequence is that of Phenylalanine--tRNA ligase beta subunit (pheT) from Neisseria meningitidis serogroup A / serotype 4A (strain DSM 15465 / Z2491).